Consider the following 201-residue polypeptide: Holliday junction branch migration complex subunit RuvA (201 aa).

The domain I stretch occupies residues methionine 1–alanine 64. The segment at serine 65–glycine 143 is domain II. Residues glycine 144–alanine 153 form a flexible linker region. A domain III region spans residues alanine 153–lysine 201.

The protein belongs to the RuvA family. In terms of assembly, homotetramer. Forms an RuvA(8)-RuvB(12)-Holliday junction (HJ) complex. HJ DNA is sandwiched between 2 RuvA tetramers; dsDNA enters through RuvA and exits via RuvB. An RuvB hexamer assembles on each DNA strand where it exits the tetramer. Each RuvB hexamer is contacted by two RuvA subunits (via domain III) on 2 adjacent RuvB subunits; this complex drives branch migration. In the full resolvosome a probable DNA-RuvA(4)-RuvB(12)-RuvC(2) complex forms which resolves the HJ.

Its subcellular location is the cytoplasm. In terms of biological role, the RuvA-RuvB-RuvC complex processes Holliday junction (HJ) DNA during genetic recombination and DNA repair, while the RuvA-RuvB complex plays an important role in the rescue of blocked DNA replication forks via replication fork reversal (RFR). RuvA specifically binds to HJ cruciform DNA, conferring on it an open structure. The RuvB hexamer acts as an ATP-dependent pump, pulling dsDNA into and through the RuvAB complex. HJ branch migration allows RuvC to scan DNA until it finds its consensus sequence, where it cleaves and resolves the cruciform DNA. This Thioalkalivibrio sulfidiphilus (strain HL-EbGR7) protein is Holliday junction branch migration complex subunit RuvA.